We begin with the raw amino-acid sequence, 324 residues long: MSKRIYARIAGTGGYLPEKVLTNDDLAHIVDTSDEWIRTRTGIRERHIAAEGETTSDLAYEAAICALEAAEVRSADLDLIVVGTTTPDLIFPSTACLLQARLGAVGCGAFDVNAACSGFVYALSVAEKFVSSGCSKTVLVVGADTLTRIIDWSDRTTCVLFGDGAGAVVLKADEDTGILSTHLHADGSKKELLWDPVGVSVGFGEGKDCGALLMKGNEVFKYAVKALDRVVDETLEANHLDKHELDWLIPHQANLRIIEATARRLDMSMDQVVVTVDRHGNTSTASVPLALDEAIRSGRVQRGQLLLLEAFGGGFTWGSALLRY.

Residues Cys-116 and His-251 contribute to the active site. An ACP-binding region spans residues 252 to 256; sequence QANLR. The active site involves Asn-281.

The protein belongs to the thiolase-like superfamily. FabH family. In terms of assembly, homodimer.

The protein resides in the cytoplasm. The enzyme catalyses malonyl-[ACP] + acetyl-CoA + H(+) = 3-oxobutanoyl-[ACP] + CO2 + CoA. It functions in the pathway lipid metabolism; fatty acid biosynthesis. In terms of biological role, catalyzes the condensation reaction of fatty acid synthesis by the addition to an acyl acceptor of two carbons from malonyl-ACP. Catalyzes the first condensation reaction which initiates fatty acid synthesis and may therefore play a role in governing the total rate of fatty acid production. Possesses both acetoacetyl-ACP synthase and acetyl transacylase activities. Its substrate specificity determines the biosynthesis of branched-chain and/or straight-chain of fatty acids. In Xylella fastidiosa (strain 9a5c), this protein is Beta-ketoacyl-[acyl-carrier-protein] synthase III.